The following is a 164-amino-acid chain: Arginine repressor (164 aa).

The protein belongs to the ArgR family.

It localises to the cytoplasm. Its pathway is amino-acid biosynthesis; L-arginine biosynthesis [regulation]. In terms of biological role, regulates arginine biosynthesis genes. The polypeptide is Arginine repressor (Mycolicibacterium paratuberculosis (strain ATCC BAA-968 / K-10) (Mycobacterium paratuberculosis)).